We begin with the raw amino-acid sequence, 145 residues long: Putative transcriptional regulatory protein PYRAB13000 (145 aa).

This sequence belongs to the Tfx family.

Its function is as follows. Putative transcriptional regulator. The protein is Putative transcriptional regulatory protein PYRAB13000 of Pyrococcus abyssi (strain GE5 / Orsay).